Here is a 543-residue protein sequence, read N- to C-terminus: Putative pectinesterase/pectinesterase inhibitor 22 (543 aa).

A signal peptide spans 1 to 19 (MGITTALLLVMLMSVHTSS). Residues 38–197 (AKACQFIDAH…TQLVSNVLDM (160 aa)) form a pectinesterase inhibitor 22 region. Residues N211 and N263 are each glycosylated (N-linked (GlcNAc...) asparagine). The interval 240–527 (NTVVAIDGKG…FTVGSFIDGR (288 aa)) is pectinesterase 22. Substrate contacts are provided by T315 and Q345. D368 (proton donor; for pectinesterase activity) is an active-site residue. C382 and C402 are joined by a disulfide. D389 serves as the catalytic Nucleophile; for pectinesterase activity. The substrate site is built by R448 and W450.

The protein in the N-terminal section; belongs to the PMEI family. It in the C-terminal section; belongs to the pectinesterase family.

Its subcellular location is the secreted. It localises to the cell wall. It carries out the reaction [(1-&gt;4)-alpha-D-galacturonosyl methyl ester](n) + n H2O = [(1-&gt;4)-alpha-D-galacturonosyl](n) + n methanol + n H(+). The protein operates within glycan metabolism; pectin degradation; 2-dehydro-3-deoxy-D-gluconate from pectin: step 1/5. In terms of biological role, acts in the modification of cell walls via demethylesterification of cell wall pectin. The chain is Putative pectinesterase/pectinesterase inhibitor 22 (PME22) from Arabidopsis thaliana (Mouse-ear cress).